A 143-amino-acid polypeptide reads, in one-letter code: Nucleoside diphosphate kinase (143 aa).

6 residues coordinate ATP: Lys-11, Phe-59, Arg-87, Thr-93, Arg-104, and Asn-114. Residue His-117 is the Pros-phosphohistidine intermediate of the active site.

The protein belongs to the NDK family. As to quaternary structure, homotetramer. Requires Mg(2+) as cofactor.

It is found in the cytoplasm. The catalysed reaction is a 2'-deoxyribonucleoside 5'-diphosphate + ATP = a 2'-deoxyribonucleoside 5'-triphosphate + ADP. It carries out the reaction a ribonucleoside 5'-diphosphate + ATP = a ribonucleoside 5'-triphosphate + ADP. Functionally, major role in the synthesis of nucleoside triphosphates other than ATP. The ATP gamma phosphate is transferred to the NDP beta phosphate via a ping-pong mechanism, using a phosphorylated active-site intermediate. The chain is Nucleoside diphosphate kinase from Alcanivorax borkumensis (strain ATCC 700651 / DSM 11573 / NCIMB 13689 / SK2).